The primary structure comprises 440 residues: Alpha-methylserine aldolase (440 aa).

Lys-255 is modified (N6-(pyridoxal phosphate)lysine).

It belongs to the SHMT family. Alpha-methylserine aldolase subfamily. In terms of assembly, homodimer. Pyridoxal 5'-phosphate is required as a cofactor.

It catalyses the reaction 2-methyl-L-serine = formaldehyde + L-alanine. Catalyzes the reversible interconversion of alpha-methyl-L-serine to L-alanine and formaldehyde. The chain is Alpha-methylserine aldolase from Variovorax paradoxus.